Here is a 165-residue protein sequence, read N- to C-terminus: ER membrane protein complex subunit 5 (165 aa).

Over 1-3 (MAP) the chain is Cytoplasmic. Residues 4 to 22 (SLWKGLVGIGLFALAHAAF) form a helical membrane-spanning segment. Topologically, residues 23–77 (SAAQHYFPSSGIKWKRKCEFLQSSSFQDKIFRSMYYVYDRSYMRLTEKEDESLPI) are lumenal. The helical transmembrane segment at 78 to 97 (DIVLQTLLAFAVTCYGIVHI) threads the bilayer. At 98-165 (AGEFKDMDAT…KLRKLESLRR (68 aa)) the chain is on the cytoplasmic side. At Ser154 the chain carries Phosphoserine.

This sequence belongs to the membrane magnesium transporter (TC 1.A.67) family. Component of the ER membrane protein complex (EMC).

Its subcellular location is the endoplasmic reticulum membrane. The protein resides in the golgi apparatus membrane. It localises to the early endosome membrane. Part of the endoplasmic reticulum membrane protein complex (EMC) that enables the energy-independent insertion into endoplasmic reticulum membranes of newly synthesized membrane proteins. Preferentially accommodates proteins with transmembrane domains that are weakly hydrophobic or contain destabilizing features such as charged and aromatic residues. Involved in the cotranslational insertion of multi-pass membrane proteins in which stop-transfer membrane-anchor sequences become ER membrane spanning helices. It is also required for the post-translational insertion of tail-anchored/TA proteins in endoplasmic reticulum membranes. By mediating the proper cotranslational insertion of N-terminal transmembrane domains in an N-exo topology, with translocated N-terminus in the lumen of the ER, controls the topology of multi-pass membrane proteins like the G protein-coupled receptors. By regulating the insertion of various proteins in membranes, it is indirectly involved in many cellular processes. May be involved in Mg(2+) transport. The protein is ER membrane protein complex subunit 5 of Bos taurus (Bovine).